The following is a 37-amino-acid chain: U1-ectatotoxin-Eb1a subunit B (37 aa).

The protein belongs to the ectatomin family. Ectatomin-Eq subfamily. Heterodimer of subunits A and B; disulfide-linked. In terms of tissue distribution, expressed by the venom gland.

The protein localises to the secreted. It localises to the target cell membrane. In Ectatomma brunneum (Ant), this protein is U1-ectatotoxin-Eb1a subunit B.